The sequence spans 881 residues: Phosphoenolpyruvate carboxylase (881 aa).

Catalysis depends on residues His139 and Lys544.

It belongs to the PEPCase type 1 family. Mg(2+) serves as cofactor.

It carries out the reaction oxaloacetate + phosphate = phosphoenolpyruvate + hydrogencarbonate. Functionally, forms oxaloacetate, a four-carbon dicarboxylic acid source for the tricarboxylic acid cycle. The polypeptide is Phosphoenolpyruvate carboxylase (Marinobacter nauticus (strain ATCC 700491 / DSM 11845 / VT8) (Marinobacter aquaeolei)).